The chain runs to 901 residues: Protein translocase subunit SecA (901 aa).

ATP-binding positions include Gln85, 103-107 (GEGKT), and Asp510. Positions 848-901 (RINQNNLPVDENSQTTQNSETEDYSDRRIGRNEPCPCGSGKKYKHCHGSRVARQ) are disordered. A compositionally biased stretch (polar residues) spans 849–866 (INQNNLPVDENSQTTQNS). Zn(2+) is bound by residues Cys882, Cys884, Cys893, and His894. Over residues 888 to 901 (KKYKHCHGSRVARQ) the composition is skewed to basic residues.

Belongs to the SecA family. As to quaternary structure, monomer and homodimer. Part of the essential Sec protein translocation apparatus which comprises SecA, SecYEG and auxiliary proteins SecDF-YajC and YidC. Zn(2+) serves as cofactor.

It is found in the cell inner membrane. It localises to the cytoplasm. It carries out the reaction ATP + H2O + cellular proteinSide 1 = ADP + phosphate + cellular proteinSide 2.. In terms of biological role, part of the Sec protein translocase complex. Interacts with the SecYEG preprotein conducting channel. Has a central role in coupling the hydrolysis of ATP to the transfer of proteins into and across the cell membrane, serving both as a receptor for the preprotein-SecB complex and as an ATP-driven molecular motor driving the stepwise translocation of polypeptide chains across the membrane. This chain is Protein translocase subunit SecA, found in Haemophilus influenzae (strain 86-028NP).